The primary structure comprises 499 residues: Glycerol kinase (499 aa).

Residue threonine 13 coordinates ADP. Positions 13, 14, and 15 each coordinate ATP. Threonine 13 serves as a coordination point for sn-glycerol 3-phosphate. ADP is bound at residue arginine 17. Arginine 83, glutamate 84, tyrosine 135, and aspartate 244 together coordinate sn-glycerol 3-phosphate. Arginine 83, glutamate 84, tyrosine 135, aspartate 244, and glutamine 245 together coordinate glycerol. Residues threonine 266 and glycine 309 each coordinate ADP. Threonine 266, glycine 309, glutamine 313, and glycine 410 together coordinate ATP. ADP contacts are provided by glycine 410 and asparagine 414.

It belongs to the FGGY kinase family. Homotetramer and homodimer (in equilibrium).

The catalysed reaction is glycerol + ATP = sn-glycerol 3-phosphate + ADP + H(+). It participates in polyol metabolism; glycerol degradation via glycerol kinase pathway; sn-glycerol 3-phosphate from glycerol: step 1/1. Its activity is regulated as follows. Activated by phosphorylation and inhibited by fructose 1,6-bisphosphate (FBP). In terms of biological role, key enzyme in the regulation of glycerol uptake and metabolism. Catalyzes the phosphorylation of glycerol to yield sn-glycerol 3-phosphate. The polypeptide is Glycerol kinase (Brevibacillus brevis (strain 47 / JCM 6285 / NBRC 100599)).